The sequence spans 332 residues: MEAIINKLYLQESLTEQESQQLFDTIIRGELDPILMASALTALKIKGETPDEIAGAAKALLANAQPFPRPDYDFADIVGTGGDGHNTINISTTAAFVAAACGLKVAKHGNRSVSSKSGSSDLLDSFGINLAMSAEDTRSAVDSIGVAFLFAPQYHSGVKHAMPVRQTMKTRTIFNILGPLINPARPNIELMGVYSQELVRPIAETMLKMGMKRAAVVHGSGLDEVAIHGDTLVAEIKDGVIHEYTLTPADFGVNTHPLEAIKGGDPEENKAIITHLLTGKGTEAQLSAVAVNVALLMRLFGHEDLKANTQQAIDVMNSGKAYQLVEKLAQHA.

Residues Gly79, 82–83, Thr87, 89–92, 107–115, and Ser119 each bind 5-phospho-alpha-D-ribose 1-diphosphate; these read GD, NIST, and KHGNRSVSS. Gly79 contacts anthranilate. Position 91 (Ser91) interacts with Mg(2+). Residue Asn110 coordinates anthranilate. Anthranilate is bound at residue Arg165. Residues Asp223 and Glu224 each coordinate Mg(2+).

This sequence belongs to the anthranilate phosphoribosyltransferase family. As to quaternary structure, homodimer. Mg(2+) is required as a cofactor.

It catalyses the reaction N-(5-phospho-beta-D-ribosyl)anthranilate + diphosphate = 5-phospho-alpha-D-ribose 1-diphosphate + anthranilate. It functions in the pathway amino-acid biosynthesis; L-tryptophan biosynthesis; L-tryptophan from chorismate: step 2/5. Functionally, catalyzes the transfer of the phosphoribosyl group of 5-phosphorylribose-1-pyrophosphate (PRPP) to anthranilate to yield N-(5'-phosphoribosyl)-anthranilate (PRA). This is Anthranilate phosphoribosyltransferase from Vibrio vulnificus (strain YJ016).